The following is a 288-amino-acid chain: METNQNEKGPSLPSYPAGGIMSVSNSNADTNQGVTQHPLANRIVNPNYYNMGFNPYSGFNSFIPSFNPFVPLETNLPGNGPISSLQVIESIVGAVGSIAQVLESTLMAAHMSYNTFVSVSENLNKLKSSIGAIFGIVSLLSRLKRLVLKFFKHSKIDEMNSQEYDVFEKEEGNHKNSIYSIVSSLAIILGLVGLPYAIIRLFKNIYEKEKQIQQAKIRKKIDSLEFCKADYEFMSRDPGVEMSLKKGDIIAILSKTDTQGNPCEWWQGRKRSGETGWFPSNYCSIISR.

The disordered stretch occupies residues 1 to 32; it reads METNQNEKGPSLPSYPAGGIMSVSNSNADTNQ. Residues 22-32 are compositionally biased toward polar residues; it reads SVSNSNADTNQ. Residues 178 to 198 form a helical membrane-spanning segment; sequence IYSIVSSLAIILGLVGLPYAI. The SH3 domain occupies 222-288; that stretch reads DSLEFCKADY…PSNYCSIISR (67 aa).

It belongs to the peroxin-13 family. As to quaternary structure, interacts (via SH3 domain) with PEX14 (via SH3-binding motif); forming the PEX13-PEX14 docking complex.

The protein localises to the peroxisome membrane. In terms of biological role, component of the PEX13-PEX14 docking complex, a translocon channel that specifically mediates the import of peroxisomal cargo proteins bound to PEX5 receptor. The PEX13-PEX14 docking complex forms a large import pore which can be opened to a diameter of about 9 nm. Mechanistically, PEX5 receptor along with cargo proteins associates with the PEX14 subunit of the PEX13-PEX14 docking complex in the cytosol, leading to the insertion of the receptor into the organelle membrane with the concomitant translocation of the cargo into the peroxisome matrix. The protein is Peroxisomal membrane protein pex13 (pex13) of Schizosaccharomyces pombe (strain 972 / ATCC 24843) (Fission yeast).